The primary structure comprises 242 residues: Tryptophan synthase alpha chain (242 aa).

Active-site proton acceptor residues include Glu31 and Asp42.

The protein belongs to the TrpA family. In terms of assembly, tetramer of two alpha and two beta chains.

It catalyses the reaction (1S,2R)-1-C-(indol-3-yl)glycerol 3-phosphate + L-serine = D-glyceraldehyde 3-phosphate + L-tryptophan + H2O. The protein operates within amino-acid biosynthesis; L-tryptophan biosynthesis; L-tryptophan from chorismate: step 5/5. Its function is as follows. The alpha subunit is responsible for the aldol cleavage of indoleglycerol phosphate to indole and glyceraldehyde 3-phosphate. This is Tryptophan synthase alpha chain from Staphylococcus aureus (strain Mu3 / ATCC 700698).